Consider the following 352-residue polypeptide: DNA integrity scanning protein DisA (352 aa).

The DAC domain maps to 3 to 143; it reads DERIVLALKS…FKYSLSEVSV (141 aa). Residues glycine 70, leucine 88, and 101–105 each bind ATP; that span reads IRHRT.

It belongs to the DisA family. In terms of assembly, homooctamer. Mg(2+) serves as cofactor.

The enzyme catalyses 2 ATP = 3',3'-c-di-AMP + 2 diphosphate. Its function is as follows. Participates in a DNA-damage check-point that is active prior to asymmetric division when DNA is damaged. DisA forms globular foci that rapidly scan along the chromosomes during sporulation, searching for lesions. When a lesion is present, DisA pauses at the lesion site. This triggers a cellular response that culminates in a temporary block in sporulation initiation. Also has diadenylate cyclase activity, catalyzing the condensation of 2 ATP molecules into cyclic di-AMP (c-di-AMP). c-di-AMP acts as a signaling molecule that couples DNA integrity with progression of sporulation. The rise in c-di-AMP level generated by DisA while scanning the chromosome, operates as a positive signal that advances sporulation; upon encountering a lesion, the DisA focus arrests at the damaged site and halts c-di-AMP synthesis. This chain is DNA integrity scanning protein DisA, found in Carboxydothermus hydrogenoformans (strain ATCC BAA-161 / DSM 6008 / Z-2901).